The primary structure comprises 134 residues: Thioredoxin H2-2 (134 aa).

Residues 1 to 20 (MGSFFSTMFTPPPAADDGGD) form a disordered region. One can recognise a Thioredoxin domain in the interval 3 to 130 (SFFSTMFTPP…LERKVNMFIS (128 aa)). Residues C56 and C59 each act as nucleophile in the active site. C56 and C59 form a disulfide bridge.

It belongs to the thioredoxin family. Plant H-type subfamily.

It localises to the cytoplasm. Functionally, probable thiol-disulfide oxidoreductase that may be involved in the redox regulation of a number of cytosolic enzymes. This is Thioredoxin H2-2 from Oryza sativa subsp. japonica (Rice).